Reading from the N-terminus, the 477-residue chain is Bifunctional protein HldE (477 aa).

The segment at 1 to 318 (MKLSMPRFDQ…RAIQREEGSE (318 aa)) is ribokinase. 194–197 (NLSE) is a binding site for ATP. Residue Asp263 is part of the active site. Residues 343–477 (FTNGCFDILH…EKIRKTDKAE (135 aa)) are cytidylyltransferase.

It in the N-terminal section; belongs to the carbohydrate kinase PfkB family. The protein in the C-terminal section; belongs to the cytidylyltransferase family. Homodimer.

It catalyses the reaction D-glycero-beta-D-manno-heptose 7-phosphate + ATP = D-glycero-beta-D-manno-heptose 1,7-bisphosphate + ADP + H(+). The catalysed reaction is D-glycero-beta-D-manno-heptose 1-phosphate + ATP + H(+) = ADP-D-glycero-beta-D-manno-heptose + diphosphate. The protein operates within nucleotide-sugar biosynthesis; ADP-L-glycero-beta-D-manno-heptose biosynthesis; ADP-L-glycero-beta-D-manno-heptose from D-glycero-beta-D-manno-heptose 7-phosphate: step 1/4. It functions in the pathway nucleotide-sugar biosynthesis; ADP-L-glycero-beta-D-manno-heptose biosynthesis; ADP-L-glycero-beta-D-manno-heptose from D-glycero-beta-D-manno-heptose 7-phosphate: step 3/4. In terms of biological role, catalyzes the phosphorylation of D-glycero-D-manno-heptose 7-phosphate at the C-1 position to selectively form D-glycero-beta-D-manno-heptose-1,7-bisphosphate. Functionally, catalyzes the ADP transfer from ATP to D-glycero-beta-D-manno-heptose 1-phosphate, yielding ADP-D-glycero-beta-D-manno-heptose. The sequence is that of Bifunctional protein HldE from Pseudomonas fluorescens (strain ATCC BAA-477 / NRRL B-23932 / Pf-5).